We begin with the raw amino-acid sequence, 283 residues long: ATP phosphoribosyltransferase (283 aa).

This sequence belongs to the ATP phosphoribosyltransferase family. Long subfamily. The cofactor is Mg(2+).

Its subcellular location is the cytoplasm. The enzyme catalyses 1-(5-phospho-beta-D-ribosyl)-ATP + diphosphate = 5-phospho-alpha-D-ribose 1-diphosphate + ATP. Its pathway is amino-acid biosynthesis; L-histidine biosynthesis; L-histidine from 5-phospho-alpha-D-ribose 1-diphosphate: step 1/9. With respect to regulation, feedback inhibited by histidine. Functionally, catalyzes the condensation of ATP and 5-phosphoribose 1-diphosphate to form N'-(5'-phosphoribosyl)-ATP (PR-ATP). Has a crucial role in the pathway because the rate of histidine biosynthesis seems to be controlled primarily by regulation of HisG enzymatic activity. This is ATP phosphoribosyltransferase from Ignicoccus hospitalis (strain KIN4/I / DSM 18386 / JCM 14125).